Consider the following 271-residue polypeptide: Phosphate import ATP-binding protein PstB (271 aa).

One can recognise an ABC transporter domain in the interval 24–266; the sequence is MIGNDVSVYY…PDDQRTQDYI (243 aa). Position 56 to 63 (56 to 63) interacts with ATP; it reads GPSGCGKS.

It belongs to the ABC transporter superfamily. Phosphate importer (TC 3.A.1.7) family. The complex is composed of two ATP-binding proteins (PstB), two transmembrane proteins (PstC and PstA) and a solute-binding protein (PstS).

The protein localises to the cell inner membrane. It catalyses the reaction phosphate(out) + ATP + H2O = ADP + 2 phosphate(in) + H(+). Part of the ABC transporter complex PstSACB involved in phosphate import. Responsible for energy coupling to the transport system. The chain is Phosphate import ATP-binding protein PstB from Rhizobium meliloti (strain 1021) (Ensifer meliloti).